Consider the following 449-residue polypeptide: Alginate biosynthesis transcriptional regulatory protein AlgB (449 aa).

In terms of domain architecture, Response regulatory spans 10-124 (RILLVDDESA…QLRLAAAKQL (115 aa)). Asp-59 is modified (4-aspartylphosphate). Residues 147–376 (LESHSPAMAA…LRNVIERASI (230 aa)) enclose the Sigma-54 factor interaction domain. Residues 175-182 (GESGSGKG) and 238-247 (ADGGTLFLDE) contribute to the ATP site. The segment at residues 426–445 (LDQAAKTLGIDASTLYRKRK) is a DNA-binding region (H-T-H motif).

In terms of processing, phosphorylated by KinB.

It functions in the pathway glycan biosynthesis; alginate biosynthesis [regulation]. In terms of biological role, member of the two-component regulatory system AlgB/KinB involved in regulation of alginate biosynthesis genes. Positive regulator of the alginate biosynthetic gene AlgD. This is Alginate biosynthesis transcriptional regulatory protein AlgB (algB) from Pseudomonas aeruginosa (strain ATCC 15692 / DSM 22644 / CIP 104116 / JCM 14847 / LMG 12228 / 1C / PRS 101 / PAO1).